Consider the following 416-residue polypeptide: Gamma-glutamyl phosphate reductase (416 aa).

It belongs to the gamma-glutamyl phosphate reductase family.

It localises to the cytoplasm. It carries out the reaction L-glutamate 5-semialdehyde + phosphate + NADP(+) = L-glutamyl 5-phosphate + NADPH + H(+). The protein operates within amino-acid biosynthesis; L-proline biosynthesis; L-glutamate 5-semialdehyde from L-glutamate: step 2/2. Catalyzes the NADPH-dependent reduction of L-glutamate 5-phosphate into L-glutamate 5-semialdehyde and phosphate. The product spontaneously undergoes cyclization to form 1-pyrroline-5-carboxylate. This Salmonella typhi protein is Gamma-glutamyl phosphate reductase.